We begin with the raw amino-acid sequence, 380 residues long: MASLRKTHPLLKIVNDALIDLPAPSNISAWWNFGSLLGLCLVTQILTGLFLAMHYTSDVATAFSSVAHICRDVNYGWLIRNIHANGASFFFICLYLHIGRGLYYGSYLYKETWNIGVVLFLLVMMTAFVGYVLPWGQMSFWGATVITNLLSAVPYVGDTLVQWIWGGFSVDNATLTRFFAFHFLFPFIIVALTVLHFFFLHETGSNNPTGINSDADKVPFHPYFSYKDLFGLVLLLLALSSLSFFSPNLLGDPDNFIPANPLVTPPHIKPEWYFLFAYAILRSIPNKLGGVLALLASILILMLVPILHTSKQRGLMFRPLTQLLFWILVADVMILTWIGGMPVEHPFIAVGQIASVLYFTLFLILIPTTGWLENKILEWN.

A run of 4 helical transmembrane segments spans residues 33–53 (FGSL…FLAM), 77–98 (WLIR…YLHI), 113–133 (WNIG…GYVL), and 178–198 (FFAF…LHFF). His83 and His97 together coordinate heme b. Heme b is bound by residues His182 and His196. A ubiquinone is bound at residue His201. 4 helical membrane passes run 226-246 (YKDL…SFFS), 288-308 (LGGV…PILH), 320-340 (LTQL…WIGG), and 347-367 (FIAV…ILIP).

The protein belongs to the cytochrome b family. The cytochrome bc1 complex contains 3 respiratory subunits (MT-CYB, CYC1 and UQCRFS1), 2 core proteins (UQCRC1 and UQCRC2) and probably 6 low-molecular weight proteins. Heme b serves as cofactor.

Its subcellular location is the mitochondrion inner membrane. Functionally, component of the ubiquinol-cytochrome c reductase complex (complex III or cytochrome b-c1 complex) that is part of the mitochondrial respiratory chain. The b-c1 complex mediates electron transfer from ubiquinol to cytochrome c. Contributes to the generation of a proton gradient across the mitochondrial membrane that is then used for ATP synthesis. The chain is Cytochrome b (mt-cyb) from Zenopsis nebulosa (Mirror dory).